Here is a 172-residue protein sequence, read N- to C-terminus: MAALASLGALALLLLSGLSCCSEACVEPQITPSYYTTSDAVISTETVFIVEISLTCKNRVQNMALYADVSGKQFPVTRGQDVGRYQVSWSLDHKSAHAGTYEVRFFDEESYSLLRKAQRNNEDVSVIPPLFTVSVDHRGTWNGPWVSTEVLAAAIGLVIYYLAFSAKSHIQA.

The first 24 residues, methionine 1–alanine 24, serve as a signal peptide directing secretion. A disulfide bond links cysteine 25 and cysteine 56. Residues cysteine 25–glycine 143 are Lumenal-facing. A Glycyl lysine isopeptide (Lys-Gly) (interchain with G-Cter in ubiquitin) cross-link involves residue lysine 72. The chain crosses the membrane as a helical span at residues proline 144–phenylalanine 164. Topologically, residues serine 165–alanine 172 are cytoplasmic.

This sequence belongs to the TRAP-delta family. As to quaternary structure, heterotetramer of TRAP-alpha, TRAP-beta, TRAP-delta and TRAP-gamma.

The protein resides in the endoplasmic reticulum membrane. Functionally, TRAP proteins are part of a complex whose function is to bind calcium to the ER membrane and thereby regulate the retention of ER resident proteins. This is Translocon-associated protein subunit delta (SSR4) from Bos taurus (Bovine).